The sequence spans 1077 residues: Rap guanine nucleotide exchange factor 1 (1077 aa).

Leucine 57 participates in a covalent cross-link: Glycyl lysine isopeptide (Lys-Gly) (interchain with G-Cter in SUMO2). Disordered regions lie at residues 207 to 235 and 248 to 300; these read IEKQ…AELP and TGMS…PTRV. The span at 213–228 shows a compositional bias: low complexity; the sequence is PSPTSPVKPSSPASKP. Residues serine 281, serine 293, serine 314, serine 335, and serine 360 each carry the phosphoserine modification. Positions 281 to 292 match the SH3-binding motif; the sequence is SPPPALPPKKRQ. 2 disordered regions span residues 336 to 376 and 411 to 494; these read GGSH…QCSR and LSPL…EDLQ. The segment covering 358–371 has biased composition (basic and acidic residues); that stretch reads SKSDEQLSSLDRDS. Residues 451-462 carry the SH3-binding motif; that stretch reads DTPPALPEKKRR. Residues 484–494 show a composition bias toward polar residues; that stretch reads QYDNISGEDLQ. Tyrosine 504 is subject to Phosphotyrosine; by HCK. Short sequence motifs (SH3-binding) lie at residues 538-549 and 606-617; these read EKPPPLPEKKNK and APPPALPPKQRQ. Residues 600–670 are disordered; it reads DSVQELAPPP…SEEEVDELSL (71 aa). Basic and acidic residues predominate over residues 640–651; the sequence is KDSRDGSERAPK. The span at 660 to 669 shows a compositional bias: acidic residues; it reads QSEEEVDELS. The N-terminal Ras-GEF domain occupies 688 to 810; sequence DGPDVRGGSG…LRKNILDKVD (123 aa). Positions 840-1064 constitute a Ras-GEF domain; the sequence is HSHEIAEQLT…WELSLKIKPR (225 aa).

Interacts with HCK (via SH3-binding sites). Interacts with CRK (via SH3-binding sites). Phosphorylation at Tyr-504 enhances activity as Rap guanine nucleotide exchange factor. In terms of tissue distribution, ubiquitously expressed in adult and fetus. Expression is high in adult skeletal muscle and placenta and in fetal brain and heart. Low levels of expression in adult and fetal liver.

The protein localises to the early endosome. Guanine nucleotide-releasing protein that binds to SH3 domain of CRK and GRB2/ASH. Transduces signals from CRK to activate RAS. Involved in cell branching and adhesion mediated by BCAR1-CRK-RAPGEF1 signaling and activation of RAP1. Plays a role in the establishment of basal endothelial barrier function. Plays a role in nerve growth factor (NGF)-induced sustained activation of Rap1 and neurite outgrowth. The polypeptide is Rap guanine nucleotide exchange factor 1 (RAPGEF1) (Homo sapiens (Human)).